Consider the following 551-residue polypeptide: MSVLLETSLGDIVIDLHTELAPRSCTNFLKLCSKHYYKLNAFFRVEKDFLAQTGDPSNTGKGGASIWSQLPSTSQDSSTSTYFTPESSDGQLKHLKKGTVSFACFRKHVQGADEDGEGGSCELLAGSQFFVTLKDELDYLDGRHAPFGMVVEGHEPGGTLDKINHAFTDDQKRPLRDIRIRHVVVLEDPFADPDGFCAPSRSPSPTPCQVRALRLADDEDVHSDVDPASKEEMRRNADTNAAALTLEMVGDLPFAEIRPPENILFVCKLNPVTRSDDLELIFSRFGKILSCEVIKDKKTGDSLQYAFIEFDKKDDAERAYFKMQNVLVDDRRIWVDFSQSVSRLHGDWVKKRNAGSDAPRAHYQSGADEQSVDSYRPNAGGYQKRGDDRRHDRRDQPTARGDTSSWHSRQDSERSYRESNDDTRDRSNKRSRRHHDDVPQQSRSRSERHDSHRDHERHHLSRHVRPSDEGESKCRYEAHSHTRHDEHTRRHDSSSTAARRDEDRRSERSRHDRDRDRDRDRDRDREREHRRRTEDRRRHDDRQRSRDGSRR.

Residues 1-185 form the PPIase cyclophilin-type domain; that stretch reads MSVLLETSLG…RDIRIRHVVV (185 aa). Positions 54–88 are disordered; sequence GDPSNTGKGGASIWSQLPSTSQDSSTSTYFTPESS. The span at 66–88 shows a compositional bias: polar residues; it reads IWSQLPSTSQDSSTSTYFTPESS. In terms of domain architecture, RRM spans 262 to 340; that stretch reads NILFVCKLNP…RRIWVDFSQS (79 aa). Residues 352–551 are disordered; the sequence is RNAGSDAPRA…RQRSRDGSRR (200 aa). Composition is skewed to basic and acidic residues over residues 384-397 and 408-454; these read KRGDDRRHDRRDQP and SRQD…SHRD. Over residues 455-464 the composition is skewed to basic residues; that stretch reads HERHHLSRHV. Basic and acidic residues predominate over residues 465 to 551; the sequence is RPSDEGESKC…RQRSRDGSRR (87 aa).

This sequence belongs to the cyclophilin-type PPIase family. PPIL4 subfamily.

It localises to the nucleus. It carries out the reaction [protein]-peptidylproline (omega=180) = [protein]-peptidylproline (omega=0). Its function is as follows. PPIases accelerate the folding of proteins. It catalyzes the cis-trans isomerization of proline imidic peptide bonds in oligopeptides. The polypeptide is Peptidyl-prolyl cis-trans isomerase-like 4 (CYP6) (Mycosarcoma maydis (Corn smut fungus)).